Here is a 181-residue protein sequence, read N- to C-terminus: ATP-dependent protease subunit HslV (181 aa).

The active site involves T7. Residues A162, C165, and T168 each coordinate Na(+).

The protein belongs to the peptidase T1B family. HslV subfamily. A double ring-shaped homohexamer of HslV is capped on each side by a ring-shaped HslU homohexamer. The assembly of the HslU/HslV complex is dependent on binding of ATP.

It localises to the cytoplasm. The catalysed reaction is ATP-dependent cleavage of peptide bonds with broad specificity.. Its activity is regulated as follows. Allosterically activated by HslU binding. Functionally, protease subunit of a proteasome-like degradation complex believed to be a general protein degrading machinery. The chain is ATP-dependent protease subunit HslV from Coxiella burnetii (strain Dugway 5J108-111).